A 203-amino-acid chain; its full sequence is Ras-related protein Rab-7a (203 aa).

Residues 15–22, 34–40, 63–67, 125–128, and 157–158 each bind GTP; these read GDSGVGKT, SNQYKAT, DTAGQ, NKID, and AK. The Effector region motif lies at 37 to 45; the sequence is YKATIGADF. S-geranylgeranyl cysteine attachment occurs at residues Cys202 and Cys203.

Belongs to the small GTPase superfamily. Rab family.

It is found in the late endosome membrane. It localises to the lysosome membrane. The protein localises to the cytoplasmic vesicle. The protein resides in the autophagosome membrane. Its subcellular location is the lipid droplet. It carries out the reaction GTP + H2O = GDP + phosphate + H(+). Its function is as follows. Small GTPase which cycles between active GTP-bound and inactive GDP-bound states. In its active state, binds to a variety of effector proteins playing a key role in the regulation of endo-lysosomal trafficking. Governs early-to-late endosomal maturation, microtubule minus-end as well as plus-end directed endosomal migration and positioning, and endosome-lysosome transport through different protein-protein interaction cascades. Involved in lipophagy, a cytosolic lipase-independent autophagic pathway. The protein is Ras-related protein Rab-7a (rab7A) of Dictyostelium discoideum (Social amoeba).